Reading from the N-terminus, the 196-residue chain is Transmembrane protein 126A (196 aa).

The Mitochondrial matrix segment spans residues 1 to 34; the sequence is MESHKPSTNKDDLIFNIIPRKIKQLPESDRNLLE. Residues 35–55 traverse the membrane as a helical segment; the sequence is YGSAYIGLNAAFGGLIANSLF. The Mitochondrial intermembrane segment spans residues 56–57; the sequence is RR. The chain crosses the membrane as a helical span at residues 58–78; that stretch reads ILNVTQARVASSLPMAVIPFL. Residues 79–106 are Mitochondrial matrix-facing; sequence TANLSYHSFVSLPLSTGNLNCEICTTTR. The helical transmembrane segment at 107 to 127 threads the bilayer; sequence GTLVGFVLGGLYPILLAIPVN. Over 128-159 the chain is Mitochondrial intermembrane; the sequence is GGLAARYESSPLPQRGNIFNYWITISKPVFRK. A helical transmembrane segment spans residues 160–176; that stretch reads MLFPTLLQTAFAAYLGS. At 177–196 the chain is on the mitochondrial matrix side; the sequence is RQYKLLIKALQLPEPDLEIQ.

It belongs to the TMEM126 family. Interacts with OXA1L; promoting cotranslational quality control in mitochondria.

Its subcellular location is the mitochondrion inner membrane. Functionally, protein required for the cotranslational protein quality control in the inner membrane of the mitochondria. Associates with newly synthesized polypeptides and may act as a chaperone that cooperates with OXA1L for the insertion of newly synthesized mitochondrial proteins into the inner membrane. Required for the assembly of the ND4 module of mitochondrial complex I. The chain is Transmembrane protein 126A (Tmem126a) from Rattus norvegicus (Rat).